Reading from the N-terminus, the 427-residue chain is MPGMVSKNPDLEFDSLQPCFYPDEDDFYLCGPDSAPPGEDIWKKFELLPTPPLSPSRPAPGAPSGRGPGAVGRSGSVGLPHDPVDWASELLLLPPEADLWGGMDGGDFFETGPGVTNNLNSIIIQDCMWSGFSAREKLERAVTEKLQNKTPAAPPPPPGTAGSPPVPARSGRAVPECVDPAVVFPFPVNKREAPAAEGLRRRRRARGDSRASSSSSSSGDDTLSDSEDDEDEEEEDEEEEIDVVTVEKRRSSTNKSVTTLTITVRPNNTTFSSVRTQQNGLILKRCAPIHQQHNYAAPSPFVETEESPPQKKLKVEVSRPVKPTIQPKLKSSSPRNSDSEDSERRRNHNILERQRANDLRSSFLTLRDHVLSELVQNEKAAKVVILKKATEYVHSLQAEEQKLLLEKEKLQARQEQLLKKIDYKRTC.

4 disordered regions span residues 45–79 (FELLPTPPLSPSRPAPGAPSGRGPGAVGRSGSVGL), 144–173 (EKLQNKTPAAPPPPPGTAGSPPVPARSGRA), 195–255 (AAEG…STNK), and 297–349 (APSP…RNHN). Pro residues-rich tracts occupy residues 49 to 61 (PTPPLSPSRPAPG) and 152 to 167 (AAPPPPPGTAGSPPVP). The span at 210–221 (RASSSSSSSGDD) shows a compositional bias: low complexity. Residues 222-242 (TLSDSEDDEDEEEEDEEEEID) are compositionally biased toward acidic residues. Phosphoserine; by CK2 is present on residues Ser-224 and Ser-226. A bHLH domain is found at 343-396 (ERRRNHNILERQRANDLRSSFLTLRDHVLSELVQNEKAAKVVILKKATEYVHSL). A leucine-zipper region spans residues 396 to 417 (LQAEEQKLLLEKEKLQARQEQL).

Efficient DNA binding requires dimerization with another bHLH protein. Binds DNA as a heterodimer with MAX.

Its subcellular location is the nucleus. This is N-myc proto-oncogene protein (MYCN) from Serinus canaria (Island canary).